The sequence spans 360 residues: uncharacterized protein (360 aa).

A PNPLA domain is found at 19 to 179 (LALGSGGARG…LDPLPMAPIA (161 aa)). A GXSXG motif is present at residues 50 to 54 (GSSMG). Catalysis depends on Ser52, which acts as the Nucleophile. Catalysis depends on Asp166, which acts as the Proton acceptor. A DGA/G motif is present at residues 166 to 168 (DGG). The disordered stretch occupies residues 251–282 (DSWSQAPEIEQRPAGPPADREEAADTPGLPKM).

Belongs to the NTE family.

This is an uncharacterized protein from Mycobacterium bovis (strain ATCC BAA-935 / AF2122/97).